We begin with the raw amino-acid sequence, 282 residues long: Bifunctional protein FolD (282 aa).

Residues 165 to 167, Ser190, and Ile231 each bind NADP(+); that span reads NRS.

Belongs to the tetrahydrofolate dehydrogenase/cyclohydrolase family. Homodimer.

It carries out the reaction (6R)-5,10-methylene-5,6,7,8-tetrahydrofolate + NADP(+) = (6R)-5,10-methenyltetrahydrofolate + NADPH. The catalysed reaction is (6R)-5,10-methenyltetrahydrofolate + H2O = (6R)-10-formyltetrahydrofolate + H(+). The protein operates within one-carbon metabolism; tetrahydrofolate interconversion. Catalyzes the oxidation of 5,10-methylenetetrahydrofolate to 5,10-methenyltetrahydrofolate and then the hydrolysis of 5,10-methenyltetrahydrofolate to 10-formyltetrahydrofolate. The sequence is that of Bifunctional protein FolD from Clostridium botulinum (strain Langeland / NCTC 10281 / Type F).